A 329-amino-acid polypeptide reads, in one-letter code: Ankyrin repeat and SOCS box protein 5 (329 aa).

6 ANK repeats span residues 69-98 (ADRSPLHEAASQGRLLALRTLLSQGYNVNA), 102-131 (DHVTPLHEACLGDHVACARTLLEAGANVNA), 135-164 (DGVTPLFNACSQGSPSCAELLLEYGAKAQL), 167-196 (CLPSPTHEAASKGHHECLDILISWGIDVDQ), 200-229 (HLGTPLYVACMSQQFHCIWKLLYAGADVQK), and 232-261 (YWDTPLHAAAQQSSTEIVNLLLEFGADINA). Positions 278 to 329 (MVERILLQHEATPSSLYQLCRLCIRSYIGKPRLHLIPQLQLPTLLKNFLQYR) constitute an SOCS box domain.

This sequence belongs to the ankyrin SOCS box (ASB) family.

Its pathway is protein modification; protein ubiquitination. Its function is as follows. May be a substrate-recognition component of a SCF-like ECS (Elongin-Cullin-SOCS-box protein) E3 ubiquitin-protein ligase complex which mediates the ubiquitination and subsequent proteasomal degradation of target proteins. May play a role in the initiation of arteriogenesis. This chain is Ankyrin repeat and SOCS box protein 5 (ASB5), found in Homo sapiens (Human).